The following is a 547-amino-acid chain: MAAKQIKFSDDARKRMARGVNVLADAVKVTLGPKGRNVVLEKSFGSPTVTKDGVSVAKEIELKDKFENMGAQMVKEVASKTSDVAGDGTTTATVLAQSIVTEGMKGVTAGMNPMDLKRGIDQAVDAAVKEIQSLSVPCTDAKAIAQVGTISANGDKRIGEIIADAMQKVGKEGVITVDEGRGFEDELEVVEGMQFDRGYLSPYFVTNQDTMMVELEDPYLLMVDKKISNIRELLPVLEAVAKSGKPLGIIAEDIEGEALATLVVNTMRGIVKAAATKAPGFGDRRKAMLQDIAILTGGTVISEEVGLTLEQANLDHLGSAKRVTMSKENTTIIDGAGVEADIEARVSQIRAQIEDTSSDYDREKLQERVAKLAGGVAVIRVGAATEFEMKEKKARVEDALHSTRAAVEEGVVPGGGTALVRILNKLVDLKGDNEDQTHGIAIALRAMEAPLRQIVTNAGQEASVIVNQVKAGEGNYGYNAQTGEYGDLFDMGVLDPAKVTRSALQSAGSVAGLMITTEAMIADDPDEKEAGGGAPDMGGMGGMGGMM.

Residues 30–33, Lys51, 87–91, Gly415, and Asp495 each bind ATP; these read TLGP and DGTTT. The segment at 525 to 547 is disordered; the sequence is PDEKEAGGGAPDMGGMGGMGGMM. A compositionally biased stretch (gly residues) spans 531 to 547; that stretch reads GGGAPDMGGMGGMGGMM.

The protein belongs to the chaperonin (HSP60) family. In terms of assembly, forms a cylinder of 14 subunits composed of two heptameric rings stacked back-to-back. Interacts with the co-chaperonin GroES.

The protein localises to the cytoplasm. It catalyses the reaction ATP + H2O + a folded polypeptide = ADP + phosphate + an unfolded polypeptide.. In terms of biological role, together with its co-chaperonin GroES, plays an essential role in assisting protein folding. The GroEL-GroES system forms a nano-cage that allows encapsulation of the non-native substrate proteins and provides a physical environment optimized to promote and accelerate protein folding. The polypeptide is Chaperonin GroEL (Chromohalobacter salexigens (strain ATCC BAA-138 / DSM 3043 / CIP 106854 / NCIMB 13768 / 1H11)).